The sequence spans 189 residues: Threonylcarbamoyl-AMP synthase (189 aa).

One can recognise a YrdC-like domain in the interval 6–189 (TAIFTPIIDA…VLTGEQIRQG (184 aa)).

The protein belongs to the SUA5 family. TsaC subfamily.

It localises to the cytoplasm. It catalyses the reaction L-threonine + hydrogencarbonate + ATP = L-threonylcarbamoyladenylate + diphosphate + H2O. Functionally, required for the formation of a threonylcarbamoyl group on adenosine at position 37 (t(6)A37) in tRNAs that read codons beginning with adenine. Catalyzes the conversion of L-threonine, HCO(3)(-)/CO(2) and ATP to give threonylcarbamoyl-AMP (TC-AMP) as the acyladenylate intermediate, with the release of diphosphate. The sequence is that of Threonylcarbamoyl-AMP synthase from Serratia proteamaculans (strain 568).